The primary structure comprises 236 residues: Peptidase E (236 aa).

Residues serine 122, aspartate 137, and histidine 159 each act as charge relay system in the active site.

The protein belongs to the peptidase S51 family.

Its subcellular location is the cytoplasm. The enzyme catalyses Dipeptidase E catalyzes the hydrolysis of dipeptides Asp-|-Xaa. It does not act on peptides with N-terminal Glu, Asn or Gln, nor does it cleave isoaspartyl peptides.. Functionally, hydrolyzes dipeptides containing N-terminal aspartate residues. May play a role in allowing the cell to use peptide aspartate to spare carbon otherwise required for the synthesis of the aspartate family of amino acids. This Shewanella putrefaciens (strain CN-32 / ATCC BAA-453) protein is Peptidase E.